A 244-amino-acid chain; its full sequence is MGALGLEGRGGRLQGRGSLLLAVAGATSLVTLLLAVPITVLAVLALVPQDQGGLVTDTADPGAQAQQGLGFQKLPEEEPEADLSPGLPAAHLIGAPLKGQGLGWEATKEQAFLTSGTQFSDADGLALPQDGLYYLYCLVGYRGRAPPGGAEPRGRSVTLRSSLYRAGGAYGPGTPELLLEGAETVTPVLDPAGRQGYGPLWYTSVGFGGLVQLRRGERVYVNISHPDMVDFARGKTFFGAVMVG.

The Cytoplasmic portion of the chain corresponds to 1 to 18; that stretch reads MGALGLEGRGGRLQGRGS. A helical; Signal-anchor for type II membrane protein transmembrane segment spans residues 19 to 48; the sequence is LLLAVAGATSLVTLLLAVPITVLAVLALVP. Topologically, residues 49–244 are extracellular; it reads QDQGGLVTDT…KTFFGAVMVG (196 aa). Residues 88 to 243 form the THD domain; the sequence is PAAHLIGAPL…GKTFFGAVMV (156 aa). N222 carries an N-linked (GlcNAc...) asparagine glycan.

This sequence belongs to the tumor necrosis factor family. As to quaternary structure, heterotrimer of either two LTB and one LTA subunits or (less prevalent) two LTA and one LTB subunits.

The protein localises to the membrane. Cytokine that binds to LTBR/TNFRSF3. May play a specific role in immune response regulation. Provides the membrane anchor for the attachment of the heterotrimeric complex to the cell surface. This Macaca mulatta (Rhesus macaque) protein is Lymphotoxin-beta (LTB).